The chain runs to 476 residues: F-box protein At5g07670 (476 aa).

Residues 59-111 enclose the F-box domain; the sequence is PDFTLLLPDLILIRVIQKIPNSQRKNLSLVCKRWFRLHGRLVRSFKVSDWEFL.

The chain is F-box protein At5g07670 from Arabidopsis thaliana (Mouse-ear cress).